Reading from the N-terminus, the 187-residue chain is ECF RNA polymerase sigma factor SigK (187 aa).

Positions 30–96 (YDHTKSRVYG…RAVDRVRCEQ (67 aa)) are sigma-70 factor domain-2. Positions 53–56 (ETTQ) match the Interaction with polymerase core subunit RpoC motif. The tract at residues 133 to 182 (CLKALTDTQRQCIELAYYGGLTYVEVSRRLAANLSTIKSRMRDALRSLRN) is sigma-70 factor domain-4. The H-T-H motif DNA-binding region spans 155-174 (YVEVSRRLAANLSTIKSRMR).

The protein belongs to the sigma-70 factor family. ECF subfamily. Interacts transiently with the RNA polymerase catalytic core formed by RpoA, RpoB, RpoC and RpoZ (2 alpha, 1 beta, 1 beta' and 1 omega subunit) to form the RNA polymerase holoenzyme that can initiate transcription. Interacts (via sigma-70 factor domain 4) with anti-sigma-K factor RskA.

Sigma factors are initiation factors that promote the attachment of RNA polymerase to specific initiation sites and are then released. Extracytoplasmic function (ECF) sigma factors are held in an inactive form by an anti-sigma factor until released by regulated intramembrane proteolysis. This is ECF RNA polymerase sigma factor SigK (sigK) from Mycobacterium tuberculosis (strain ATCC 25177 / H37Ra).